The primary structure comprises 364 residues: V-type proton ATPase subunit d (364 aa).

Belongs to the V-ATPase V0D/AC39 subunit family. As to quaternary structure, V-ATPase is a heteromultimeric enzyme composed of a peripheral catalytic V1 complex (components A to H) attached to an integral membrane V0 proton pore complex (components: a, c, c', c'', d, e, f and VOA1).

It localises to the vacuole membrane. In terms of biological role, subunit of the V0 complex of vacuolar(H+)-ATPase (V-ATPase), a multisubunit enzyme composed of a peripheral complex (V1) that hydrolyzes ATP and a membrane integral complex (V0) that translocates protons. V-ATPase is responsible for acidifying and maintaining the pH of intracellular compartments. This subunit is a non-integral membrane component of the membrane pore domain and is required for proper assembly of the V0 sector. Might be involved in the regulated assembly of V1 subunits onto the membrane sector or alternatively may prevent the passage of protons through V0 pores. The polypeptide is V-type proton ATPase subunit d (Neurospora crassa (strain ATCC 24698 / 74-OR23-1A / CBS 708.71 / DSM 1257 / FGSC 987)).